The chain runs to 71 residues: uncharacterized protein (71 aa).

Helical transmembrane passes span Phe9–Phe29 and Phe41–Leu61.

It localises to the membrane. This is an uncharacterized protein from Acheta domesticus (House cricket).